A 1091-amino-acid polypeptide reads, in one-letter code: Protein diaphanous (1091 aa).

The disordered stretch occupies residues 1–37; sequence MSRHEKTKSTGGGLLDSLFGRPSKSKGGTISSGTLAH. The tract at residues 1–56 is basic region; sequence MSRHEKTKSTGGGLLDSLFGRPSKSKGGTISSGTLAHGGRPVSADNYVVPGVEDFE. The segment covering 25 to 34 has biased composition (low complexity); the sequence is SKGGTISSGT. One can recognise a GBD/FH3 domain in the interval 59 to 431; it reads IQQLSVAELD…QIVFHKGYCD (373 aa). A coiled-coil region spans residues 455-496; the sequence is KAKESKRSEEYEKKIEQLESAKQEAEAKAAHLEEKVKLMEAN. 3 disordered regions span residues 499-589, 994-1021, and 1039-1072; these read AAPS…MMMG, RLQE…DMDA, and GSAF…RTRV. Residues 512–572 are compositionally biased toward pro residues; it reads PMPPPPPGGG…MGGPPPPPMP (61 aa). The 85-residue stretch at 512–596 folds into the FH1 domain; it reads PMPPPPPGGG…MMGPMVPVLP (85 aa). The 401-residue stretch at 601 to 1001 folds into the FH2 domain; sequence PKKKWDVKNP…KRRLQEAREQ (401 aa). Residues 994-1010 are compositionally biased toward basic and acidic residues; it reads RLQEAREQSAREQQERQ. The DAD domain occupies 1022-1054; the sequence is PQTQEGVMDSLLEALQTGSAFGQRNRQARRQRP.

It belongs to the formin homology family. Diaphanous subfamily. May interact (via CBD/FH3 domain) with Rho1.

It localises to the cytoplasm. The protein localises to the cytoskeleton. The protein resides in the cleavage furrow. It is found in the apical cell membrane. Functionally, required for cytokinesis in both mitosis and meiosis. Has a role in actin cytoskeleton organization and is essential for many, if not all, actin-mediated events involving membrane invagination. May serve as a mediator between signaling molecules and actin organizers at specific phases of the cell cycle. Possible component of the contractile ring or may control its function. This Drosophila melanogaster (Fruit fly) protein is Protein diaphanous (dia).